We begin with the raw amino-acid sequence, 164 residues long: Phosphopantetheine adenylyltransferase (164 aa).

Substrate is bound at residue serine 10. ATP is bound by residues 10-11 (SF) and histidine 18. Residues lysine 42, threonine 79, and arginine 93 each coordinate substrate. ATP contacts are provided by residues 94–96 (GLR), glutamate 104, and 129–135 (VRPITAS).

This sequence belongs to the bacterial CoaD family. In terms of assembly, homohexamer. It depends on Mg(2+) as a cofactor.

It localises to the cytoplasm. It carries out the reaction (R)-4'-phosphopantetheine + ATP + H(+) = 3'-dephospho-CoA + diphosphate. Its pathway is cofactor biosynthesis; coenzyme A biosynthesis; CoA from (R)-pantothenate: step 4/5. In terms of biological role, reversibly transfers an adenylyl group from ATP to 4'-phosphopantetheine, yielding dephospho-CoA (dPCoA) and pyrophosphate. This Bradyrhizobium sp. (strain ORS 278) protein is Phosphopantetheine adenylyltransferase.